A 508-amino-acid polypeptide reads, in one-letter code: Photosystem II CP47 reaction center protein (508 aa).

6 helical membrane-spanning segments follow: residues 21 to 36 (SVHI…WAGS), 101 to 115 (IVFS…IWHW), 140 to 156 (GIHL…FGAF), 203 to 218 (IAAG…FHLS), 237 to 252 (VLSS…AFVV), and 457 to 472 (SFAL…HGAR).

Belongs to the PsbB/PsbC family. PsbB subfamily. PSII is composed of 1 copy each of membrane proteins PsbA, PsbB, PsbC, PsbD, PsbE, PsbF, PsbH, PsbI, PsbJ, PsbK, PsbL, PsbM, PsbT, PsbX, PsbY, PsbZ, Psb30/Ycf12, at least 3 peripheral proteins of the oxygen-evolving complex and a large number of cofactors. It forms dimeric complexes. It depends on Binds multiple chlorophylls. PSII binds additional chlorophylls, carotenoids and specific lipids. as a cofactor.

Its subcellular location is the plastid. The protein resides in the chloroplast thylakoid membrane. In terms of biological role, one of the components of the core complex of photosystem II (PSII). It binds chlorophyll and helps catalyze the primary light-induced photochemical processes of PSII. PSII is a light-driven water:plastoquinone oxidoreductase, using light energy to abstract electrons from H(2)O, generating O(2) and a proton gradient subsequently used for ATP formation. The sequence is that of Photosystem II CP47 reaction center protein from Manihot esculenta (Cassava).